Reading from the N-terminus, the 115-residue chain is Prefoldin subunit beta (115 aa).

The protein belongs to the prefoldin subunit beta family. In terms of assembly, heterohexamer of two alpha and four beta subunits.

It localises to the cytoplasm. Molecular chaperone capable of stabilizing a range of proteins. Seems to fulfill an ATP-independent, HSP70-like function in archaeal de novo protein folding. The chain is Prefoldin subunit beta from Methanococcus aeolicus (strain ATCC BAA-1280 / DSM 17508 / OCM 812 / Nankai-3).